The sequence spans 507 residues: Inactive alanine aminotransferase (507 aa).

The pyridoxal 5'-phosphate site is built by A173, S174, Y199, N255, and S324. K327 carries the N6-(pyridoxal phosphate)lysine modification. R336 contributes to the pyridoxal 5'-phosphate binding site.

It belongs to the class-I pyridoxal-phosphate-dependent aminotransferase family. Alanine aminotransferase subfamily. In terms of assembly, homodimer. It depends on pyridoxal 5'-phosphate as a cofactor.

The protein resides in the cytoplasm. The protein localises to the nucleus. Inactive alanine aminotransferase. Forms a catalytically active Schiff base with PLP, but lacks alanine transaminase activity, probably due to an altered structural conformation of the dimeric enzyme. This suggests this protein may have a yet undiscovered physiological function. In Saccharomyces cerevisiae (strain ATCC 204508 / S288c) (Baker's yeast), this protein is Inactive alanine aminotransferase (ALT2).